The primary structure comprises 252 residues: 2-succinyl-6-hydroxy-2,4-cyclohexadiene-1-carboxylate synthase (252 aa).

This sequence belongs to the AB hydrolase superfamily. MenH family. In terms of assembly, monomer.

It carries out the reaction 5-enolpyruvoyl-6-hydroxy-2-succinyl-cyclohex-3-ene-1-carboxylate = (1R,6R)-6-hydroxy-2-succinyl-cyclohexa-2,4-diene-1-carboxylate + pyruvate. It participates in quinol/quinone metabolism; 1,4-dihydroxy-2-naphthoate biosynthesis; 1,4-dihydroxy-2-naphthoate from chorismate: step 3/7. The protein operates within quinol/quinone metabolism; menaquinone biosynthesis. Its function is as follows. Catalyzes a proton abstraction reaction that results in 2,5-elimination of pyruvate from 2-succinyl-5-enolpyruvyl-6-hydroxy-3-cyclohexene-1-carboxylate (SEPHCHC) and the formation of 2-succinyl-6-hydroxy-2,4-cyclohexadiene-1-carboxylate (SHCHC). The chain is 2-succinyl-6-hydroxy-2,4-cyclohexadiene-1-carboxylate synthase from Escherichia coli O9:H4 (strain HS).